The chain runs to 235 residues: Golgi to ER traffic protein 1 (235 aa).

A topological domain (lumenal) is located at residue methionine 1. A helical transmembrane segment spans residues 2–21 (HWAAAVAIFFIVVTKFLQYT). The Cytoplasmic segment spans residues 22-104 (NKYHEKWISK…AFQAHLHKLR (83 aa)). A coiled-coil region spans residues 68-104 (WTKNNRKLDSLDKEINNLKDEIQSENKAFQAHLHKLR). A helical transmembrane segment spans residues 105 to 125 (LLALTVPFFVFKIMYGKTPVY). Residues 126–181 (KLSSSTSTLFPTFVSGVWSQGWLYVLLHPLRTISQKWHIMEGKFGASKFDDMALQS) lie on the Lumenal side of the membrane. Residues 182–198 (VSLGIWVWALMNVINGV) traverse the membrane as a helical segment. Over 199–235 (EFIVKQLFLTPKMEAPASVETQEEKALDAVDDAIILD) the chain is Cytoplasmic.

The protein belongs to the WRB/GET1 family. As to quaternary structure, component of the Golgi to ER traffic (GET) complex, which is composed of GET1, GET2 and GET3. Within the complex, GET1 and GET2 form a heterotetramer which is stabilized by phosphatidylinositol binding and which binds to the GET3 homodimer.

It is found in the endoplasmic reticulum membrane. It localises to the golgi apparatus membrane. Its function is as follows. Required for the post-translational delivery of tail-anchored (TA) proteins to the endoplasmic reticulum. Together with GET2, acts as a membrane receptor for soluble GET3, which recognizes and selectively binds the transmembrane domain of TA proteins in the cytosol. The GET complex cooperates with the HDEL receptor ERD2 to mediate the ATP-dependent retrieval of resident ER proteins that contain a C-terminal H-D-E-L retention signal from the Golgi to the ER. This Saccharomyces cerevisiae (strain RM11-1a) (Baker's yeast) protein is Golgi to ER traffic protein 1.